Reading from the N-terminus, the 189-residue chain is HGPRTase-like protein 2 (189 aa).

Belongs to the purine/pyrimidine phosphoribosyltransferase family. Archaeal HPRT subfamily.

In terms of biological role, may catalyze a purine salvage reaction, the substrate is unknown. The polypeptide is HGPRTase-like protein 2 (Halalkalicoccus jeotgali (strain DSM 18796 / CECT 7217 / JCM 14584 / KCTC 4019 / B3)).